The sequence spans 261 residues: Small ribosomal subunit protein uS2 (261 aa).

The protein belongs to the universal ribosomal protein uS2 family.

The polypeptide is Small ribosomal subunit protein uS2 (Streptococcus mutans serotype c (strain ATCC 700610 / UA159)).